The primary structure comprises 268 residues: Small ribosomal subunit protein uS2 (268 aa).

Residues 233-268 form a disordered region; the sequence is SVREEEFAEAAAEGEEKPARRAPAKKAAKKGDDAQA.

The protein belongs to the universal ribosomal protein uS2 family.

The sequence is that of Small ribosomal subunit protein uS2 from Stenotrophomonas maltophilia (strain K279a).